Reading from the N-terminus, the 270-residue chain is Metallo-beta-lactamase type 2 (270 aa).

The first 28 residues, 1-28, serve as a signal peptide directing secretion; the sequence is MELPNIMHPVAKLSTALAAALMLSGCMP. Positions 120, 122, 124, 189, and 208 each coordinate Zn(2+). 2 residues coordinate substrate: K211 and N220. H250 provides a ligand contact to Zn(2+).

The protein belongs to the metallo-beta-lactamase superfamily. Class-B beta-lactamase family. Monomer. It depends on Zn(2+) as a cofactor.

The protein resides in the periplasm. It carries out the reaction a beta-lactam + H2O = a substituted beta-amino acid. With respect to regulation, inhibits by captopril, thiorphan, dimercaprol and tiopronin. This enzyme is not susceptible to inactivation by the beta-lactamase-blocking agents clavulanic acid. Functionally, confers resistance to the different beta-lactams antibiotics (penicillin, cephalosporin and carbapenem) via the hydrolysis of the beta-lactam ring. Does not confer resistance to the polymixin colistin or the fluoroquinolone ciprofloxacin. The sequence is that of Metallo-beta-lactamase type 2 from Klebsiella pneumoniae.